A 186-amino-acid polypeptide reads, in one-letter code: Catechol O-methyltransferase (186 aa).

S-adenosyl-L-methionine-binding positions include V7, E29, S37, E55, L56, 82 to 85 (GASQ), S84, and D106. D106 contacts Mg(2+). Residue K109 participates in substrate binding. Mg(2+) is bound by residues D134 and N135. Residues N135 and E164 each contribute to the substrate site. At S182 the chain carries Phosphoserine.

It belongs to the class I-like SAM-binding methyltransferase superfamily. Cation-dependent O-methyltransferase family. Requires Mg(2+) as cofactor.

The protein localises to the cytoplasm. It localises to the cell membrane. It carries out the reaction a catechol + S-adenosyl-L-methionine = a guaiacol + S-adenosyl-L-homocysteine + H(+). The enzyme catalyses 2-hydroxyestrone + S-adenosyl-L-methionine = 2-hydroxy-3-methoxy-estrone + S-adenosyl-L-homocysteine + H(+). It catalyses the reaction 4-hydroxyestrone + S-adenosyl-L-methionine = 4-methoxyestrone + S-adenosyl-L-homocysteine + H(+). The catalysed reaction is 2-hydroxyestrone + S-adenosyl-L-methionine = 2-methoxyestrone + S-adenosyl-L-homocysteine + H(+). It carries out the reaction 4-hydroxy-17beta-estradiol + S-adenosyl-L-methionine = 4-methoxy-17beta-estradiol + S-adenosyl-L-homocysteine + H(+). The enzyme catalyses 2-hydroxy-17beta-estradiol + S-adenosyl-L-methionine = 2-hydroxy-3-methoxy-17beta-estradiol + S-adenosyl-L-homocysteine + H(+). It catalyses the reaction 2-hydroxy-17beta-estradiol + S-adenosyl-L-methionine = 2-methoxy-17beta-estradiol + S-adenosyl-L-homocysteine + H(+). Catalyzes the O-methylation, and thereby the inactivation, of catecholamine neurotransmitters and catechol hormones. Also shortens the biological half-lives of certain neuroactive drugs, like L-DOPA, alpha-methyl DOPA and isoproterenol. In Sus scrofa (Pig), this protein is Catechol O-methyltransferase (COMT).